Here is a 211-residue protein sequence, read N- to C-terminus: tRNA (guanine-N(7)-)-methyltransferase (211 aa).

S-adenosyl-L-methionine contacts are provided by glutamate 43, aspartate 68, asparagine 95, and asparagine 117. Substrate is bound at residue lysine 121. The tract at residues 123–128 is interaction with RNA; it reads RHNKRR. Substrate contacts are provided by residues aspartate 153 and 190–193; that span reads TEYE.

The protein belongs to the class I-like SAM-binding methyltransferase superfamily. TrmB family.

The catalysed reaction is guanosine(46) in tRNA + S-adenosyl-L-methionine = N(7)-methylguanosine(46) in tRNA + S-adenosyl-L-homocysteine. The protein operates within tRNA modification; N(7)-methylguanine-tRNA biosynthesis. Functionally, catalyzes the formation of N(7)-methylguanine at position 46 (m7G46) in tRNA. This Clostridium tetani (strain Massachusetts / E88) protein is tRNA (guanine-N(7)-)-methyltransferase.